The sequence spans 797 residues: Ent-atiserene synthase KSL1, chloroplastic (797 aa).

A chloroplast-targeting transit peptide spans 1-48; sequence LVKDDMSLILSSFSLFRSSRSSPASASLAGSGHPRTTPPKIASLQSPM. Low complexity predominate over residues 21–32; sequence SSPASASLAGSG. A disordered region spans residues 21-47; it reads SSPASASLAGSGHPRTTPPKIASLQSP. The Mg(2+) site is built by Asp547, Asp551, Asn691, and Glu699. The DDXXD motif motif lies at 547–551; that stretch reads DDLFD.

This sequence belongs to the terpene synthase family. It depends on Mg(2+) as a cofactor.

The protein resides in the plastid. It localises to the chloroplast. It catalyses the reaction ent-copalyl diphosphate = ent-atiserene + diphosphate. It participates in secondary metabolite biosynthesis; terpenoid biosynthesis. In terms of biological role, involved in the biosynthesis of ent-kaurene diterpenoids natural products such as oridonin, miltiradiene, eriocalyxin B and nezukol, known to exhibit antitumor, anti-inflammatory and antibacterial activities. Catalyzes the conversion of ent-copalyl diphosphate (ent-CPP) to ent-atiserene. The protein is Ent-atiserene synthase KSL1, chloroplastic of Isodon japonicus (Scutellaria japonica).